The sequence spans 367 residues: Isoflavone 4'-O-methyltransferase (367 aa).

S-adenosyl-L-methionine contacts are provided by residues 209–212, Asp233, 233–234, 253–254, and Lys267; these read VGGG, DQ, and DM. His271 functions as the Proton acceptor in the catalytic mechanism.

It belongs to the class I-like SAM-binding methyltransferase superfamily. Cation-independent O-methyltransferase family. COMT subfamily.

It carries out the reaction a 4'-hydroxyisoflavone + S-adenosyl-L-methionine = a 4'-methoxyisoflavone + S-adenosyl-L-homocysteine + H(+). The catalysed reaction is (2R,3S)-2,4',7-trihydroxyisoflavanone + S-adenosyl-L-methionine = (2R,3S)-2,7-dihydroxy-4'-methoxyisoflavanone + S-adenosyl-L-homocysteine + H(+). Functionally, 2-hydroxyisoflavanone 4'-O-methyltransferase involved in the biosynthesis of formononetin. Can use 2,7,4'-trihydroxyisoflavanone, (+)-6a-hydroxymaackiain or medicarpin as substrate, but not daidzein or (-)-6a-hydroxymaackiain. The sequence is that of Isoflavone 4'-O-methyltransferase (HI4'OMT) from Glycyrrhiza echinata (Licorice).